Consider the following 519-residue polypeptide: Trichothecene 15-O-acetyltransferase TRI3 (519 aa).

H414 provides a ligand contact to 15-deacetylcalonectrin.

The protein belongs to the trichothecene O-acetyltransferase family.

Its pathway is sesquiterpene biosynthesis; trichothecene biosynthesis. Its function is as follows. 15-O-acetyltransferase; part of the core gene cluster that mediates the biosynthesis of trichothecenes, a very large family of chemically related bicyclic sesquiterpene compounds acting as mycotoxins, including T2-toxin. The biosynthesis of trichothecenes begins with the cyclization of farnesyl diphosphate to trichodiene and is catalyzed by the trichodiene synthase TRI5. Trichodiene undergoes a series of oxygenations catalyzed by the cytochrome P450 monooxygenase TRI4. TRI4 controls the addition of four oxygens at C-2, C-3, C-11, and the C-12, C-13-epoxide to form the intermediate isotrichotriol. Isotrichotriol then undergoes a non-enzymatic isomerization and cyclization to form isotrichodermol. During this process, the oxygen at the C-2 position becomes the pyran ring oxygen and the hydroxyl group at C-11 is lost. More complex type A trichothecenes are built by modifying isotrichodermol through a series of paired hydroxylation and acetylation or acylation steps. Isotrichodermol is converted to isotrichodermin by the acetyltransferase TRI101. TRI101 encodes a C-3 transacetylase that acts as a self-protection or resistance factor during biosynthesis and that the presence of a free C-3 hydroxyl group is a key component of Fusarium trichothecene phytotoxicity. A second hydroxyl group is added to C-15 by the trichothecene C-15 hydroxylase TRI11, producing 15-decalonectrin, which is then acetylated by TRI3, producing calonectrin. A third hydroxyl group is added at C-4 by the cytochrome P450 monooxygenase TRI13, converting calonectrin to 3,15-diacetoxyspirpenol, which is subsequently acetylated by the acetyltransferase TRI7. A fourth hydroxyl group is added to C-8 by the cytochrome P450 monooxygenase TRI1, followed by the addition of an isovaleryl moiety by TRI16. Finally, the acetyl group is removed from the C-3 position by the trichothecene C-3 esterase TRI8 to produce T-2 toxin. The polypeptide is Trichothecene 15-O-acetyltransferase TRI3 (Fusarium sporotrichioides).